Reading from the N-terminus, the 608-residue chain is Albumin 2 (608 aa).

Residues 1 to 14 (MQWLSVCSLLVLLS) form the signal peptide. A propeptide spanning residues 15-18 (VLSR) is cleaved from the precursor. Albumin domains are found at residues 19–205 (SQAQ…TFQH), 206–398 (AIAK…AGSD), and 402–600 (KITD…KLVS). 18 disulfide bridges follow: C26–C72, C71–C80, C93–C108, C107–C118, C142–C187, C186–C195, C218–C264, C263–C271, C283–C299, C298–C309, C336–C381, C380–C389, C414–C460, C459–C471, C484–C500, C499–C510, C537–C582, and C581–C590. The N-linked (GlcNAc...) asparagine glycan is linked to N501.

The protein belongs to the ALB/AFP/VDB family. Plasma.

Its subcellular location is the secreted. Binds water, Ca(2+), Na(+), K(+), fatty acids, hormones, bilirubin and drugs. Its main function is the regulation of the colloidal osmotic pressure of blood. This is Albumin 2 (alb2) from Salmo salar (Atlantic salmon).